Here is a 2273-residue protein sequence, read N- to C-terminus: Acetyl-CoA carboxylase, mitochondrial (2273 aa).

Residues 1–104 constitute a mitochondrion transit peptide; that stretch reads KGKTITHGQS…RGNIHKHTRL (104 aa). Residues 134-635 form the Biotin carboxylation domain; sequence VISKILIANN…STGWLDDLIL (502 aa). One can recognise an ATP-grasp domain in the interval 292–484; that stretch reads KTNFVSVPDD…LPATQLQIAM (193 aa). 332 to 337 contributes to the ATP binding site; it reads GGGGKG. The active site involves Arg-459. In terms of domain architecture, Biotinyl-binding spans 763–837; the sequence is LEAELNPTQV…EAGDVIAKLT (75 aa). The residue at position 804 (Lys-804) is an N6-biotinyllysine. Positions 1532–1867 constitute a CoA carboxyltransferase N-terminal domain; that stretch reads PYSVKDWLQP…KRDMSPPLLE (336 aa). A carboxyltransferase region spans residues 1532–2187; the sequence is PYSVKDWLQP…EGQVIKRLQK (656 aa). CoA is bound by residues Arg-1776, Lys-2080, and Arg-2082. Residues 1871–2187 enclose the CoA carboxyltransferase C-terminal domain; that stretch reads RWDRDVDFKP…EGQVIKRLQK (317 aa).

It depends on biotin as a cofactor.

The protein localises to the mitochondrion. It catalyses the reaction hydrogencarbonate + acetyl-CoA + ATP = malonyl-CoA + ADP + phosphate + H(+). It carries out the reaction N(6)-biotinyl-L-lysyl-[protein] + hydrogencarbonate + ATP = N(6)-carboxybiotinyl-L-lysyl-[protein] + ADP + phosphate + H(+). The protein operates within lipid metabolism; malonyl-CoA biosynthesis; malonyl-CoA from acetyl-CoA: step 1/1. Its function is as follows. Catalyzes the rate-limiting reaction in the mitochondrial fatty acid synthesis (FAS) type II pathway. Responsible for the production of the mitochondrial malonyl-CoA, used for the biosynthesis of the cofactor lipoic acid. This protein carries three functions: biotin carboxyl carrier protein, biotin carboxylase, and carboxyltransferase. The protein is Acetyl-CoA carboxylase, mitochondrial (HFA1) of Saccharomyces cerevisiae (strain ATCC 204508 / S288c) (Baker's yeast).